Consider the following 122-residue polypeptide: Large ribosomal subunit protein bL12 (122 aa).

Belongs to the bacterial ribosomal protein bL12 family. In terms of assembly, homodimer. Part of the ribosomal stalk of the 50S ribosomal subunit. Forms a multimeric L10(L12)X complex, where L10 forms an elongated spine to which 2 to 4 L12 dimers bind in a sequential fashion. Binds GTP-bound translation factors.

Forms part of the ribosomal stalk which helps the ribosome interact with GTP-bound translation factors. Is thus essential for accurate translation. This Staphylococcus haemolyticus (strain JCSC1435) protein is Large ribosomal subunit protein bL12.